Here is a 657-residue protein sequence, read N- to C-terminus: Tetracycline resistance protein TetQ (657 aa).

One can recognise a tr-type G domain in the interval 17 to 260; that stretch reads MNIINLGILA…AISSFILPPE (244 aa). GTP-binding positions include 26–33, 90–94, and 144–147; these read AHIDAGKT, DTPGH, and NKID.

Belongs to the TRAFAC class translation factor GTPase superfamily. Classic translation factor GTPase family. TetM/TetO subfamily.

Its function is as follows. Abolishes the inhibitory effect of tetracycline on protein synthesis by non-covalently modifying ribosomes. Confers mild resistance to tetracycline when expressed in E.coli. The polypeptide is Tetracycline resistance protein TetQ (tetQ) (Bacteroides fragilis).